The chain runs to 189 residues: Probable nicotinate-nucleotide adenylyltransferase (189 aa).

Belongs to the NadD family.

The catalysed reaction is nicotinate beta-D-ribonucleotide + ATP + H(+) = deamido-NAD(+) + diphosphate. The protein operates within cofactor biosynthesis; NAD(+) biosynthesis; deamido-NAD(+) from nicotinate D-ribonucleotide: step 1/1. In terms of biological role, catalyzes the reversible adenylation of nicotinate mononucleotide (NaMN) to nicotinic acid adenine dinucleotide (NaAD). The protein is Probable nicotinate-nucleotide adenylyltransferase of Staphylococcus aureus (strain USA300 / TCH1516).